A 148-amino-acid chain; its full sequence is CASP-like protein 1 (148 aa).

The next 3 helical transmembrane spans lie at 31–51 (FIYF…TSLL), 74–94 (VLLL…GYIG), and 121–141 (IAAG…SFFT).

The protein belongs to the Casparian strip membrane proteins (CASP) family. In terms of assembly, homodimer and heterodimers.

The protein resides in the cell membrane. This chain is CASP-like protein 1, found in Panax ginseng (Korean ginseng).